We begin with the raw amino-acid sequence, 1221 residues long: A disintegrin and metalloproteinase with thrombospondin motifs 18 (1221 aa).

Positions 1 to 47 (MECALLLACAFPAAGSGPPRGLAGLGRVAKALQLCCLCCASVAAALA) are cleaved as a signal peptide. A propeptide spanning residues 48 to 284 (SDSSSGASGL…EYGSSGRPRR (237 aa)) is cleaved from the precursor. Residues N151 and N190 are each glycosylated (N-linked (GlcNAc...) asparagine). A Cysteine switch motif is present at residues 252–259 (HFCGRRKK). Position 254 (C254) interacts with Zn(2+). The tract at residues 258 to 291 (KKYAPKPPTEDTYLRFDEYGSSGRPRRSAGKSQK) is disordered. Positions 265 to 275 (PTEDTYLRFDE) are enriched in basic and acidic residues. The region spanning 293-498 (LNVETLVVAD…PQAGCLVDEP (206 aa)) is the Peptidase M12B domain. N-linked (GlcNAc...) asparagine glycosylation is present at N313. 11 disulfide bridges follow: C369–C420, C395–C402, C414–C493, C453–C477, C521–C546, C532–C553, C541–C572, C566–C577, C601–C638, C605–C643, and C616–C628. H436 contributes to the Zn(2+) binding site. The active site involves E437. 2 residues coordinate Zn(2+): H440 and H446. One can recognise a Disintegrin domain in the interval 498-577 (PKQAGQYKYP…LSMWCRQGQC (80 aa)). In terms of domain architecture, TSP type-1 1 spans 589-644 (HGQWSAWSKWSECSRTCGGGVKFQERHCNNPKPQYGGLFCPGSSRIYQLCNINPCN). Residues N745, N838, and N909 are each glycosylated (N-linked (GlcNAc...) asparagine). The segment at 750–876 (FYKGLYLNQH…TPPATKRPAY (127 aa)) is spacer. TSP type-1 domains lie at 931 to 990 (CPAY…NSHA), 991 to 1049 (CPPQ…GRCP), 1052 to 1116 (SRLQ…RACP), and 1123 to 1178 (MVAG…NFCP). A PLAC domain is found at 1184–1221 (EDPSCVDFFNWCHLVPQHGVCNHKFYGKQCCKSCTRKI).

Requires Zn(2+) as cofactor. The precursor is cleaved by a furin endopeptidase. Post-translationally, glycosylated. Can be O-fucosylated by POFUT2 on a serine or a threonine residue found within the consensus sequence C1-X(2)-(S/T)-C2-G of the TSP type-1 repeat domains where C1 and C2 are the first and second cysteine residue of the repeat, respectively. Fucosylated repeats can then be further glycosylated by the addition of a beta-1,3-glucose residue by the glucosyltransferase, B3GALTL. Fucosylation mediates the efficient secretion of ADAMTS family members. Can also be C-glycosylated with one or two mannose molecules on tryptophan residues within the consensus sequence W-X-X-W of the TPRs, and N-glycosylated. These other glycosylations can also facilitate secretion. As to expression, expressed in fetal lung, liver, and kidney and in adult brain, prostate, submaxillary gland, and endothelium.

The protein localises to the secreted. The protein resides in the extracellular space. Its subcellular location is the extracellular matrix. The polypeptide is A disintegrin and metalloproteinase with thrombospondin motifs 18 (ADAMTS18) (Homo sapiens (Human)).